We begin with the raw amino-acid sequence, 308 residues long: MLAGRDFLSNLDMTSAELRAVMDTAHSMKAGEWRAVKPLSGLSLALVFEKASLRTRTTFDVGMYQLGGHAITLSNTEIGLGTRERVSDVARNLERWVDGVMGRVYLQQTLVELAQHARIPVINGLSDMLHPAQLLADYQTIEEEFGQDLRGKRVVYIGDGNNLANSHIHMGILTGTDVTVVTPVGYEPNAGVLMDAVKAGVEVHLTNDLDAIQGADVLYTDVWISMGQEAEADIRRRAFRGYQVTPEMLETISPDGIFLHCLPAHYGEETVPEATEHPKSRVFDQAENRLHAQKALLYHVLGDMKPRW.

Carbamoyl phosphate-binding positions include Arg-103 and 130–133; that span reads HPAQ. Residues Asn-162, Asp-221, and 225–226 contribute to the L-ornithine site; that span reads SM. Carbamoyl phosphate is bound by residues 261-262 and Arg-289; that span reads CL.

It belongs to the aspartate/ornithine carbamoyltransferase superfamily. OTCase family.

Its subcellular location is the cytoplasm. It carries out the reaction carbamoyl phosphate + L-ornithine = L-citrulline + phosphate + H(+). The protein operates within amino-acid biosynthesis; L-arginine biosynthesis; L-arginine from L-ornithine and carbamoyl phosphate: step 1/3. Reversibly catalyzes the transfer of the carbamoyl group from carbamoyl phosphate (CP) to the N(epsilon) atom of ornithine (ORN) to produce L-citrulline. The sequence is that of Ornithine carbamoyltransferase from Deinococcus radiodurans (strain ATCC 13939 / DSM 20539 / JCM 16871 / CCUG 27074 / LMG 4051 / NBRC 15346 / NCIMB 9279 / VKM B-1422 / R1).